The primary structure comprises 409 residues: Probable glutaryl-CoA dehydrogenase, mitochondrial (409 aa).

Residue 110–111 (RS) participates in substrate binding. Residues 149-152 (FGLT), S158, and 184-186 (WIS) each bind FAD. S158 is a binding site for substrate. Substrate is bound by residues 261 to 265 (FGCLN) and R268. Residue E388 is the Proton acceptor of the active site. FAD is bound by residues T390 and F408.

Belongs to the acyl-CoA dehydrogenase family. FAD serves as cofactor.

The protein localises to the mitochondrion matrix. It catalyses the reaction glutaryl-CoA + oxidized [electron-transfer flavoprotein] + 2 H(+) = (2E)-butenoyl-CoA + reduced [electron-transfer flavoprotein] + CO2. Its pathway is amino-acid metabolism; lysine degradation. The protein operates within amino-acid metabolism; tryptophan metabolism. The chain is Probable glutaryl-CoA dehydrogenase, mitochondrial from Caenorhabditis elegans.